Here is a 123-residue protein sequence, read N- to C-terminus: Small ribosomal subunit protein uS12 (123 aa).

A 3-methylthioaspartic acid modification is found at D89.

Belongs to the universal ribosomal protein uS12 family. As to quaternary structure, part of the 30S ribosomal subunit. Contacts proteins S8 and S17. May interact with IF1 in the 30S initiation complex.

In terms of biological role, with S4 and S5 plays an important role in translational accuracy. Its function is as follows. Interacts with and stabilizes bases of the 16S rRNA that are involved in tRNA selection in the A site and with the mRNA backbone. Located at the interface of the 30S and 50S subunits, it traverses the body of the 30S subunit contacting proteins on the other side and probably holding the rRNA structure together. The combined cluster of proteins S8, S12 and S17 appears to hold together the shoulder and platform of the 30S subunit. In Phenylobacterium zucineum (strain HLK1), this protein is Small ribosomal subunit protein uS12.